A 303-amino-acid polypeptide reads, in one-letter code: Nucleotide-binding protein Dvul_1502 (303 aa).

23–30 serves as a coordination point for ATP; that stretch reads GLSGAGKS. Residue 75–78 coordinates GTP; the sequence is DLRE.

This sequence belongs to the RapZ-like family.

Functionally, displays ATPase and GTPase activities. This chain is Nucleotide-binding protein Dvul_1502, found in Nitratidesulfovibrio vulgaris (strain DP4) (Desulfovibrio vulgaris).